Here is a 285-residue protein sequence, read N- to C-terminus: Protein HEXIM1 (285 aa).

Disordered regions lie at residues 1–56 (MSEV…QNPG) and 132–196 (LMED…LQKD). Residues 23–36 (GGWHHPVEREEHPV) show a composition bias toward basic and acidic residues. The segment covering 168–180 (TDDDLEEEEDEAG) has biased composition (acidic residues). The stretch at 213-284 (SKQDLIKEYL…QEGKQVAADS (72 aa)) forms a coiled coil.

The protein belongs to the HEXIM family. As to quaternary structure, homooligomer and heterooligomer. Core component of the 7SK RNP complex.

It localises to the nucleus. It is found in the cytoplasm. Transcriptional regulator which functions as a general RNA polymerase II transcription inhibitor. Core component of the 7SK RNP complex: in cooperation with 7SK snRNA sequesters P-TEFb in a large inactive 7SK snRNP complex preventing RNA polymerase II phosphorylation and subsequent transcriptional elongation. Plays a role in the regulation of DNA virus-mediated innate immune response by assembling into the HDP-RNP complex, a complex that serves as a platform for IRF3 phosphorylation and subsequent innate immune response activation through the cGAS-STING pathway. The polypeptide is Protein HEXIM1 (hexim1) (Xenopus laevis (African clawed frog)).